Here is a 739-residue protein sequence, read N- to C-terminus: Sulfate transporter (739 aa).

The disordered stretch occupies residues 1-44 (MSSENKEQHNLSPRDLPEEAYGFPPELPLGAQRGSSTDLRQFEP). S12 is subject to Phosphoserine. 2 helical membrane-spanning segments follow: residues 112 to 132 (MMSG…YSLL) and 137 to 157 (PIYG…FGTS). A glycan (N-linked (GlcNAc...) asparagine) is linked at N205. 2 helical membrane passes run 227 to 247 (FMAG…VSVY) and 255 to 275 (GFVT…LLGL). N-linked (GlcNAc...) asparagine glycosylation occurs at N357. Transmembrane regions (helical) follow at residues 378 to 398 (LIPN…AITV), 420 to 440 (AIGF…SAAL), 455 to 475 (LSAI…APLF), and 524 to 544 (LLST…CVIL). An STAS domain is found at 568–719 (TYKNLRSKSG…YSLSEAVAFA (152 aa)).

Belongs to the SLC26A/SulP transporter (TC 2.A.53) family. N-glycosylated. Cartilage and intestine. Expressed in the kidney (at protein level).

The protein resides in the cell membrane. The protein localises to the apical cell membrane. The catalysed reaction is oxalate(in) + sulfate(out) = oxalate(out) + sulfate(in). It carries out the reaction sulfate(out) + 2 chloride(in) = sulfate(in) + 2 chloride(out). It catalyses the reaction oxalate(out) + 2 chloride(in) = oxalate(in) + 2 chloride(out). The enzyme catalyses bromide(in) + chloride(out) = bromide(out) + chloride(in). The catalysed reaction is nitrate(in) + chloride(out) = nitrate(out) + chloride(in). It carries out the reaction iodide(in) + chloride(out) = iodide(out) + chloride(in). Functionally, sulfate transporter which mediates sulfate uptake into chondrocytes in order to maintain adequate sulfation of proteoglycans which is needed for cartilage development. Mediates electroneutral anion exchange of sulfate ions for oxalate ions, sulfate and oxalate ions for chloride and/or hydroxyl ions and chloride ions for bromide, iodide and nitrate ions. The coupling of sulfate transport to both hydroxyl and chloride ions likely serves to ensure transport at both acidic pH when most sulfate uptake is mediated by sulfate-hydroxide exchange and alkaline pH when most sulfate uptake is mediated by sulfate-chloride exchange. Essential for chondrocyte proliferation, differentiation and cell size expansion. This Rattus norvegicus (Rat) protein is Sulfate transporter (Slc26a2).